Here is a 379-residue protein sequence, read N- to C-terminus: L-lactate dehydrogenase (379 aa).

The FMN hydroxy acid dehydrogenase domain occupies 1 to 379; it reads MIISASTDYR…ITSDLLVKER (379 aa). Tyrosine 24 lines the substrate pocket. Positions 106 and 127 each coordinate FMN. Substrate is bound at residue tyrosine 129. Position 155 (threonine 155) interacts with FMN. Residue arginine 164 coordinates substrate. Lysine 251 provides a ligand contact to FMN. Histidine 275 functions as the Proton acceptor in the catalytic mechanism. A substrate-binding site is contributed by arginine 278. 306–330 provides a ligand contact to FMN; that stretch reads DSGIRTGLDVVRMLALGADTVLLGR.

The protein belongs to the FMN-dependent alpha-hydroxy acid dehydrogenase family. Homotetramer. FMN serves as cofactor.

It is found in the cell inner membrane. The catalysed reaction is (S)-lactate + A = pyruvate + AH2. Functionally, catalyzes the conversion of L-lactate to pyruvate. Is coupled to the respiratory chain. In Ectopseudomonas mendocina (strain ymp) (Pseudomonas mendocina), this protein is L-lactate dehydrogenase.